We begin with the raw amino-acid sequence, 214 residues long: ATP phosphoribosyltransferase (214 aa).

Belongs to the ATP phosphoribosyltransferase family. Short subfamily. In terms of assembly, heteromultimer composed of HisG and HisZ subunits.

It is found in the cytoplasm. The catalysed reaction is 1-(5-phospho-beta-D-ribosyl)-ATP + diphosphate = 5-phospho-alpha-D-ribose 1-diphosphate + ATP. It functions in the pathway amino-acid biosynthesis; L-histidine biosynthesis; L-histidine from 5-phospho-alpha-D-ribose 1-diphosphate: step 1/9. Functionally, catalyzes the condensation of ATP and 5-phosphoribose 1-diphosphate to form N'-(5'-phosphoribosyl)-ATP (PR-ATP). Has a crucial role in the pathway because the rate of histidine biosynthesis seems to be controlled primarily by regulation of HisG enzymatic activity. The protein is ATP phosphoribosyltransferase of Alcanivorax borkumensis (strain ATCC 700651 / DSM 11573 / NCIMB 13689 / SK2).